Here is a 403-residue protein sequence, read N- to C-terminus: MISEIMHPTKLLKGTKSKLLENKKILVAVTSSIAAIETPKLMRELIRHGAEVYCIITEETKKIIGKEALKFGCGNEVYEEITGDIEHILLYNECDCLLIYPATANIISKINLGIADNIVNTTALMFFGNKPIFIVPAMHENMFNAIKRHIDKLKEKDKIYIISPKFEEGKAKVANIEDVVKAVIEKIGNNLKKEGNRVLILNGGTVEFIDKVRVISNLSSGKMGVALAEAFCKEGFYVEVITAMGLEPPYYIKNHKVLTAKEMLNKAIELAKDFDIIISSAAISDFTVESFEGKLSSEEELILKLKRNPKVLEELRRIYKDKVIIGFKAEYNLDEKELINRAKERLNKYNLNMIIANDLSKHYFGDDYIEVYIITKYEVEKISGSKKEISERIVEKVKKLVKS.

Residues methionine 1–arginine 197 are phosphopantothenoylcysteine decarboxylase. The phosphopantothenate--cysteine ligase stretch occupies residues valine 198–serine 403. Aspartate 285, lysine 294, and phenylalanine 327 together coordinate CTP.

In the N-terminal section; belongs to the HFCD (homo-oligomeric flavin containing Cys decarboxylase) superfamily. This sequence in the C-terminal section; belongs to the PPC synthetase family. As to quaternary structure, homododecamer. The CoaC domain is responsible for dodecamer formation. Mg(2+) serves as cofactor. FMN is required as a cofactor.

The enzyme catalyses N-[(R)-4-phosphopantothenoyl]-L-cysteine + H(+) = (R)-4'-phosphopantetheine + CO2. The catalysed reaction is (R)-4'-phosphopantothenate + L-cysteine + CTP = N-[(R)-4-phosphopantothenoyl]-L-cysteine + CMP + diphosphate + H(+). It functions in the pathway cofactor biosynthesis; coenzyme A biosynthesis. In terms of biological role, catalyzes two sequential steps in the biosynthesis of coenzyme A. In the first step cysteine is conjugated to 4'-phosphopantothenate to form 4-phosphopantothenoylcysteine. In the second step the latter compound is decarboxylated to form 4'-phosphopantotheine. The protein is Coenzyme A biosynthesis bifunctional protein CoaBC of Methanocaldococcus jannaschii (strain ATCC 43067 / DSM 2661 / JAL-1 / JCM 10045 / NBRC 100440) (Methanococcus jannaschii).